We begin with the raw amino-acid sequence, 240 residues long: Small ribosomal subunit protein uS2c (240 aa).

The protein belongs to the universal ribosomal protein uS2 family.

Its subcellular location is the plastid. The protein resides in the chloroplast. This chain is Small ribosomal subunit protein uS2c (rps2), found in Cycas taitungensis (Prince sago).